A 352-amino-acid polypeptide reads, in one-letter code: Holliday junction branch migration complex subunit RuvB (352 aa).

Residues 1 to 42 (MAIVSSSAGRADSQPPAAKSRVVDASPLPEEASPAREDGLRP) form a disordered region. A large ATPase domain (RuvB-L) region spans residues 13–201 (SQPPAAKSRV…FGLIQRLEFY (189 aa)). The span at 33–42 (SPAREDGLRP) shows a compositional bias: basic and acidic residues. ATP-binding residues include Leu-40, Arg-41, Gly-82, Lys-85, Thr-86, Thr-87, Arg-191, Tyr-201, and Arg-238. Position 86 (Thr-86) interacts with Mg(2+). A small ATPAse domain (RuvB-S) region spans residues 202–273 (GLEDLQAIVE…LVDEALTLHR (72 aa)). The segment at 276–352 (ARGLDASDRR…RRHLGWPELP (77 aa)) is head domain (RuvB-H). Residues Arg-331 and Arg-336 each contribute to the DNA site.

The protein belongs to the RuvB family. As to quaternary structure, homohexamer. Forms an RuvA(8)-RuvB(12)-Holliday junction (HJ) complex. HJ DNA is sandwiched between 2 RuvA tetramers; dsDNA enters through RuvA and exits via RuvB. An RuvB hexamer assembles on each DNA strand where it exits the tetramer. Each RuvB hexamer is contacted by two RuvA subunits (via domain III) on 2 adjacent RuvB subunits; this complex drives branch migration. In the full resolvosome a probable DNA-RuvA(4)-RuvB(12)-RuvC(2) complex forms which resolves the HJ.

It localises to the cytoplasm. It catalyses the reaction ATP + H2O = ADP + phosphate + H(+). In terms of biological role, the RuvA-RuvB-RuvC complex processes Holliday junction (HJ) DNA during genetic recombination and DNA repair, while the RuvA-RuvB complex plays an important role in the rescue of blocked DNA replication forks via replication fork reversal (RFR). RuvA specifically binds to HJ cruciform DNA, conferring on it an open structure. The RuvB hexamer acts as an ATP-dependent pump, pulling dsDNA into and through the RuvAB complex. RuvB forms 2 homohexamers on either side of HJ DNA bound by 1 or 2 RuvA tetramers; 4 subunits per hexamer contact DNA at a time. Coordinated motions by a converter formed by DNA-disengaged RuvB subunits stimulates ATP hydrolysis and nucleotide exchange. Immobilization of the converter enables RuvB to convert the ATP-contained energy into a lever motion, pulling 2 nucleotides of DNA out of the RuvA tetramer per ATP hydrolyzed, thus driving DNA branch migration. The RuvB motors rotate together with the DNA substrate, which together with the progressing nucleotide cycle form the mechanistic basis for DNA recombination by continuous HJ branch migration. Branch migration allows RuvC to scan DNA until it finds its consensus sequence, where it cleaves and resolves cruciform DNA. This is Holliday junction branch migration complex subunit RuvB from Prochlorococcus marinus (strain MIT 9313).